We begin with the raw amino-acid sequence, 462 residues long: Glycine--tRNA ligase (462 aa).

Residues Arg100 and Glu175 each coordinate substrate. ATP-binding positions include 207 to 209 (RNE), 217 to 222 (FRTREF), 291 to 292 (EL), and 335 to 338 (GADR). 222–226 (FEQME) contributes to the substrate binding site. 331-335 (EPSLG) is a substrate binding site.

The protein belongs to the class-II aminoacyl-tRNA synthetase family. In terms of assembly, homodimer.

It localises to the cytoplasm. It catalyses the reaction tRNA(Gly) + glycine + ATP = glycyl-tRNA(Gly) + AMP + diphosphate. Its function is as follows. Catalyzes the attachment of glycine to tRNA(Gly). The sequence is that of Glycine--tRNA ligase from Clostridium acetobutylicum (strain ATCC 824 / DSM 792 / JCM 1419 / IAM 19013 / LMG 5710 / NBRC 13948 / NRRL B-527 / VKM B-1787 / 2291 / W).